Reading from the N-terminus, the 305-residue chain is Beta-lactamase ROB-1 (305 aa).

Residues 1 to 33 form the signal peptide; that stretch reads MLNKLKIGTLLLLTLTACSPNSVHSVTSNPQPA. Ser-86 functions as the Acyl-ester intermediate in the catalytic mechanism. 248-250 contacts substrate; sequence KSG.

This sequence belongs to the class-A beta-lactamase family.

The catalysed reaction is a beta-lactam + H2O = a substituted beta-amino acid. In Actinobacillus pleuropneumoniae (Haemophilus pleuropneumoniae), this protein is Beta-lactamase ROB-1 (rob1).